The chain runs to 490 residues: Glutathione hydrolase 6 (490 aa).

Topologically, residues 1–52 (MEPEAGPVLYQKLRVWEPSLESEEEEEEISEQLILDASGPHDSSGNKAGRLP) are cytoplasmic. The helical; Signal-anchor for type II membrane protein transmembrane segment at 53–73 (GAWAQLVAALLLLAIGFSLAV) threads the bilayer. Over 74-490 (RQLCSSGASP…PSGCCPFQGF (417 aa)) the chain is Extracellular. N-linked (GlcNAc...) asparagine glycans are attached at residues N160, N165, and N374.

This sequence belongs to the gamma-glutamyltransferase family. As to quaternary structure, heterodimer composed of the light and heavy chains. The active site is located in the light chain. In terms of processing, cleaved by autocatalysis into a large and a small subunit and the autocatalytic cleavage is essential to the functional activation of the enzyme.

The protein resides in the membrane. It catalyses the reaction an N-terminal (5-L-glutamyl)-[peptide] + an alpha-amino acid = 5-L-glutamyl amino acid + an N-terminal L-alpha-aminoacyl-[peptide]. The enzyme catalyses glutathione + H2O = L-cysteinylglycine + L-glutamate. The catalysed reaction is an S-substituted glutathione + H2O = an S-substituted L-cysteinylglycine + L-glutamate. Its pathway is sulfur metabolism; glutathione metabolism. In terms of biological role, hydrolyzes and transfers gamma-glutamyl moieties from glutathione and other gamma-glutamyl compounds to acceptors. This is Glutathione hydrolase 6 from Bos taurus (Bovine).